Here is a 69-residue protein sequence, read N- to C-terminus: Putative membrane protein insertion efficiency factor (69 aa).

It belongs to the UPF0161 family.

The protein resides in the cell membrane. In terms of biological role, could be involved in insertion of integral membrane proteins into the membrane. This chain is Putative membrane protein insertion efficiency factor, found in Clostridium kluyveri (strain NBRC 12016).